The following is a 575-amino-acid chain: Acetylcholine receptor subunit beta-type acr-2 (575 aa).

Residues 1 to 20 (MKKTVKILLILITVFLKVHC) form the signal peptide. Residues 21–270 (NGGHDDEAAD…IRRKTLFYTV (250 aa)) are Extracellular-facing. Residues 31 to 57 (FLSHTNIDDPNNSSDPNKNSDQGDTMG) form a disordered region. The span at 38–50 (DDPNNSSDPNKNS) shows a compositional bias: low complexity. 4 N-linked (GlcNAc...) asparagine glycosylation sites follow: Asn41, Asn42, Asn80, and Asn131. The cysteines at positions 185 and 199 are disulfide-linked. Transmembrane regions (helical) follow at residues 271–291 (ILII…YLPV), 299–319 (LTIS…KILP), and 331–351 (LLLA…IVNI). The Cytoplasmic segment spans residues 352 to 527 (YFRSALSHKM…WKYVAMVLDR (176 aa)). A helical transmembrane segment spans residues 528 to 548 (LILLIFFGVTLGGTLGIICSA).

It belongs to the ligand-gated ion channel (TC 1.A.9) family. Acetylcholine receptor (TC 1.A.9.1) subfamily. As to quaternary structure, component of nicotinic acetylcholine receptor. In cholinergic motoneurons, composed of 2 non-alpha subunits acr-2 and acr-3, and 3 alpha subunits unc-38, unc-63 and acr-12. As to expression, specifically expressed in cholinergic ventral cord motoneurons of the VA, VB, DA and DB classes but not AS and VC classes. Expressed in PVQ and DVC neurons in the tail.

Its subcellular location is the postsynaptic cell membrane. The protein localises to the cell membrane. Its function is as follows. Non-alpha subunit of nicotinic acetylcholine receptor (nAChR). Acts in cholinergic motoneurons to regulate presynaptic neurotransmitter release, thereby ensuring normal level of excitation of cholinergic motoneurons during locomotion. This Caenorhabditis elegans protein is Acetylcholine receptor subunit beta-type acr-2 (acr-2).